A 354-amino-acid chain; its full sequence is Photosystem II protein D1 1 (354 aa).

3 helical membrane-spanning segments follow: residues 29–46, 118–133, and 142–156; these read YIGW…TATT, HFLI…EWEL, and WIAV…AATA. His118 lines the chlorophyll a pocket. Tyr126 contacts pheophytin a. 2 residues coordinate [CaMn4O5] cluster: Asp170 and Glu189. Residues 197-218 form a helical membrane-spanning segment; sequence FHQLGVAGVFGGALFSAMHGSL. His198 is a binding site for chlorophyll a. A quinone contacts are provided by residues His215 and 264-265; that span reads SF. His215 contributes to the Fe cation binding site. A Fe cation-binding site is contributed by His272. The helical transmembrane segment at 274 to 288 threads the bilayer; the sequence is FLAAWPVIGIWFTAL. [CaMn4O5] cluster contacts are provided by His332, Glu333, Asp342, and Ala344. The propeptide occupies 345-354; that stretch reads AVEVAPAIRG.

Belongs to the reaction center PufL/M/PsbA/D family. PSII is composed of 1 copy each of membrane proteins PsbA, PsbB, PsbC, PsbD, PsbE, PsbF, PsbH, PsbI, PsbJ, PsbK, PsbL, PsbM, PsbT, PsbX, PsbY, PsbZ, Psb30/Ycf12, peripheral proteins PsbO, CyanoQ (PsbQ), PsbU, PsbV and a large number of cofactors. It forms dimeric complexes. It depends on The D1/D2 heterodimer binds P680, chlorophylls that are the primary electron donor of PSII, and subsequent electron acceptors. It shares a non-heme iron and each subunit binds pheophytin, quinone, additional chlorophylls, carotenoids and lipids. D1 provides most of the ligands for the Mn4-Ca-O5 cluster of the oxygen-evolving complex (OEC). There is also a Cl(-1) ion associated with D1 and D2, which is required for oxygen evolution. The PSII complex binds additional chlorophylls, carotenoids and specific lipids. as a cofactor. In terms of processing, tyr-161 forms a radical intermediate that is referred to as redox-active TyrZ, YZ or Y-Z. C-terminally processed by CtpA; processing is essential to allow assembly of the oxygen-evolving complex and thus photosynthetic growth.

It is found in the cellular thylakoid membrane. It catalyses the reaction 2 a plastoquinone + 4 hnu + 2 H2O = 2 a plastoquinol + O2. Its function is as follows. Photosystem II (PSII) is a light-driven water:plastoquinone oxidoreductase that uses light energy to abstract electrons from H(2)O, generating O(2) and a proton gradient subsequently used for ATP formation. It consists of a core antenna complex that captures photons, and an electron transfer chain that converts photonic excitation into a charge separation. The D1/D2 (PsbA/PsbD) reaction center heterodimer binds P680, the primary electron donor of PSII as well as several subsequent electron acceptors. This is Photosystem II protein D1 1 from Synechococcus sp. (strain JA-3-3Ab) (Cyanobacteria bacterium Yellowstone A-Prime).